Consider the following 307-residue polypeptide: tRNA dimethylallyltransferase (307 aa).

Residue 10–17 (GPTAVGKT) coordinates ATP. 12–17 (TAVGKT) contributes to the substrate binding site. Residues 35–38 (DSMQ) are interaction with substrate tRNA.

The protein belongs to the IPP transferase family. In terms of assembly, monomer. Mg(2+) is required as a cofactor.

It catalyses the reaction adenosine(37) in tRNA + dimethylallyl diphosphate = N(6)-dimethylallyladenosine(37) in tRNA + diphosphate. Catalyzes the transfer of a dimethylallyl group onto the adenine at position 37 in tRNAs that read codons beginning with uridine, leading to the formation of N6-(dimethylallyl)adenosine (i(6)A). This Ligilactobacillus salivarius (strain UCC118) (Lactobacillus salivarius) protein is tRNA dimethylallyltransferase.